A 376-amino-acid chain; its full sequence is GDSL esterase/lipase At5g55050 (376 aa).

Residues 1 to 29 (MPTNNTPFLTIFLLFLGLLRFDSFPGLEA) form the signal peptide. The active-site Nucleophile is the Ser-46. Asn-134 and Asn-245 each carry an N-linked (GlcNAc...) asparagine glycan. Catalysis depends on residues Asp-340 and His-344.

This sequence belongs to the 'GDSL' lipolytic enzyme family.

It is found in the secreted. The sequence is that of GDSL esterase/lipase At5g55050 from Arabidopsis thaliana (Mouse-ear cress).